A 340-amino-acid polypeptide reads, in one-letter code: Trimethylamine N-oxide transport system ATP-binding protein TmoW (340 aa).

Residues Gly32–Thr268 form the ABC transporter domain. Gly64 to Ser71 is an ATP binding site.

Belongs to the ABC transporter superfamily. As to quaternary structure, the complex is probably composed of two ATP-binding proteins (TmoW), two transmembrane proteins (TmoV) and a solute-binding protein (TmoX).

It localises to the cell inner membrane. The catalysed reaction is a quaternary ammonium(out) + ATP + H2O = a quaternary ammonium(in) + ADP + phosphate + H(+). Part of the ABC transporter complex TmoXWV involved in trimethylamine N-oxide (TMAO) import. Responsible for energy coupling to the transport system. Is specific for TMAO and essential for TMAO metabolism. The sequence is that of Trimethylamine N-oxide transport system ATP-binding protein TmoW from Ruegeria pomeroyi (strain ATCC 700808 / DSM 15171 / DSS-3) (Silicibacter pomeroyi).